Here is a 118-residue protein sequence, read N- to C-terminus: M-zodatoxin-Lt8p (118 aa).

A signal peptide spans 1–3 (AES). Residues 4-43 (KPAESEHELAEVEEENELADLEDAVWLEHLADLSDLEEAR) constitute a propeptide that is removed on maturation.

This sequence belongs to the cationic peptide 06 (cytoinsectotoxin) family. As to expression, expressed by the venom gland.

It is found in the secreted. Its function is as follows. Insecticidal, cytolytic and antimicrobial peptide. Forms voltage-dependent, ion-permeable channels in membranes. At high concentration causes cell membrane lysis. This chain is M-zodatoxin-Lt8p (cit 1-15), found in Lachesana tarabaevi (Spider).